The sequence spans 498 residues: Swainsonine transporter swnT (498 aa).

Over residues 1-10 (MSLRNDEQTE) the composition is skewed to basic and acidic residues. Residues 1 to 21 (MSLRNDEQTEKGAVVGKVDSQ) form a disordered region. The next 5 helical transmembrane spans lie at 42–64 (LSAI…VLGT), 79–99 (LAMA…ISAI), 126–146 (AMIS…AVPV), 167–187 (FVVF…EYFL), and 193–213 (ALLL…FATA). Residues Asn227 and Asn242 are each glycosylated (N-linked (GlcNAc...) asparagine). The next 6 helical transmembrane spans lie at 272-292 (LIWT…AVLV), 316-336 (AAAI…VWSI), 370-390 (PIWS…LYLA), 398-418 (LIAT…ILVL), 436-456 (GFMA…FYCF), and 469-489 (YVSA…FLYA).

This sequence belongs to the amino acid-polyamine-organocation (APC) superfamily. Amino acid/choline transporter (ACT) (TC 2.A.3.4) family.

The protein resides in the membrane. Transmembrane transporter; part of the gene cluster that mediates the biosynthesis of swainsonine, a cytotoxic fungal alkaloid and a potential cancer therapy drug. Does not mediate the secretion of SW and the exact role of swnT in SW biosynthesis remains to be determined. This Arthroderma benhamiae (strain ATCC MYA-4681 / CBS 112371) (Trichophyton mentagrophytes) protein is Swainsonine transporter swnT.